Consider the following 126-residue polypeptide: MDKDYINDGSLSEKWKYRFSFYDQHGFPGFWKVSPEYKQAFKALKPRQRLTIQINFIAFFFSWIYLFVLGLWKKAIIVILLGIVAIFIGALIGVNILGLVVAAYVGVNTNKWFYEKEVKGINTWSL.

This is an uncharacterized protein from Salmonella typhi.